The following is a 425-amino-acid chain: Lipoyl synthase, mitochondrial (425 aa).

The transit peptide at 1 to 33 (MAASSTRLRCLYASSSTWKTSPSQSLISLSRRY) directs the protein to the mitochondrion. A disordered region spans residues 17-55 (TWKTSPSQSLISLSRRYATTSSAPPTPSDESSSTLPKRR). Residues 33–51 (YATTSSAPPTPSDESSSTL) are compositionally biased toward polar residues. [4Fe-4S] cluster contacts are provided by Cys142, Cys147, Cys153, Cys173, Cys177, Cys180, and Ser388. The Radical SAM core domain occupies 156-377 (GSDKSAATAT…RQRALEMGFL (222 aa)).

Belongs to the radical SAM superfamily. Lipoyl synthase family. It depends on [4Fe-4S] cluster as a cofactor.

The protein localises to the mitochondrion. It carries out the reaction [[Fe-S] cluster scaffold protein carrying a second [4Fe-4S](2+) cluster] + N(6)-octanoyl-L-lysyl-[protein] + 2 oxidized [2Fe-2S]-[ferredoxin] + 2 S-adenosyl-L-methionine + 4 H(+) = [[Fe-S] cluster scaffold protein] + N(6)-[(R)-dihydrolipoyl]-L-lysyl-[protein] + 4 Fe(3+) + 2 hydrogen sulfide + 2 5'-deoxyadenosine + 2 L-methionine + 2 reduced [2Fe-2S]-[ferredoxin]. The protein operates within protein modification; protein lipoylation via endogenous pathway; protein N(6)-(lipoyl)lysine from octanoyl-[acyl-carrier-protein]: step 2/2. Functionally, catalyzes the radical-mediated insertion of two sulfur atoms into the C-6 and C-8 positions of the octanoyl moiety bound to the lipoyl domains of lipoate-dependent enzymes, thereby converting the octanoylated domains into lipoylated derivatives. In Talaromyces marneffei (strain ATCC 18224 / CBS 334.59 / QM 7333) (Penicillium marneffei), this protein is Lipoyl synthase, mitochondrial.